The primary structure comprises 141 residues: Ly6/PLAUR domain-containing protein 1 (141 aa).

The first 20 residues, 1-20, serve as a signal peptide directing secretion; sequence MWVLGIAATFCGLFLLPGFA. Disulfide bonds link Cys25-Cys54, Cys28-Cys37, Cys46-Cys71, Cys77-Cys100, Cys88-Cys97, and Cys101-Cys106. Positions 25-107 constitute a UPAR/Ly6 domain; the sequence is CYQCEEFQLN…ISCCNTPLCN (83 aa). The N-linked (GlcNAc...) asparagine glycan is linked to Asn45. Ser117 is lipidated: GPI-anchor amidated serine. A propeptide spans 118 to 141 (removed in mature form); the sequence is ASALRPGLRTTILFLKLALFSAHC.

In terms of assembly, interacts with CHRNA4 and nAChRs containing alpha-4:beta-2 (CHRNA4:CHRNB2) and alpha-7 (CHRNA7) subunits.

It localises to the cell membrane. Believed to act as a modulator of nicotinic acetylcholine receptors (nAChRs) activity. In vitro increases receptor desensitization and decreases affinity for ACh of alpha-4:beta-2-containing nAChRs. May play a role in the intracellular trafficking of alpha-4:beta-2 and alpha-7-containing nAChRs and may inhibit their expression at the cell surface. May be involved in the control of anxiety. This is Ly6/PLAUR domain-containing protein 1 (LYPD1) from Homo sapiens (Human).